A 533-amino-acid polypeptide reads, in one-letter code: Thromboxane-A synthase (533 aa).

At 1-10 (MEVLGLLKFE) the chain is on the cytoplasmic side. A helical membrane pass occupies residues 11–31 (VSGTVVTVTLSVVLLALLKWY). The Lumenal portion of the chain corresponds to 32–75 (STSAFSRLRKLGIRHPEPSPFVGNLMFFRQGFWESHLELRERYG). The chain crosses the membrane as a helical span at residues 76–96 (PLCGYYLGRRMYIVISDPDMI). At 97–223 (KEVLVENFSN…QRVFAFSTPR (127 aa)) the chain is on the cytoplasmic side. Residues 224–244 (PLLALILSFPSIMVPLARILP) form a helical membrane-spanning segment. Residues 245–335 (NKNRDELNGF…LTVDEIAGQA (91 aa)) are Lumenal-facing. A helical membrane pass occupies residues 336-356 (FLFLIAGHEITTNTLSFITYL). Topologically, residues 357–533 (LATHPECQER…NGVYVKIVSR (177 aa)) are cytoplasmic. Position 479 (Cys479) interacts with heme.

Belongs to the cytochrome P450 family. As to quaternary structure, monomer. Requires heme as cofactor. As to expression, expressed in bone marrow, spleen, lung, thymus, liver, uterus, and macrophages.

Its subcellular location is the endoplasmic reticulum membrane. The enzyme catalyses prostaglandin H2 = thromboxane A2. The catalysed reaction is prostaglandin H2 = (12S)-hydroxy-(5Z,8E,10E)-heptadecatrienoate + malonaldehyde. It catalyses the reaction a hydroperoxyeicosatetraenoate = an oxoeicosatetraenoate + H2O. It carries out the reaction (15S)-hydroperoxy-(5Z,8Z,11Z,13E)-eicosatetraenoate = 15-oxo-(5Z,8Z,11Z,13E)-eicosatetraenoate + H2O. The enzyme catalyses (15S)-hydroperoxy-(5Z,8Z,11Z,13E)-eicosatetraenoate + AH2 = (15S)-hydroxy-(5Z,8Z,11Z,13E)-eicosatetraenoate + A + H2O. Functionally, catalyzes the conversion of prostaglandin H2 (PGH2) to thromboxane A2 (TXA2), a potent inducer of blood vessel constriction and platelet aggregation. Also cleaves PGH2 to 12-hydroxy-heptadecatrienoicacid (12-HHT) and malondialdehyde, which is known to act as a mediator of DNA damage. 12-HHT and malondialdehyde are formed stoichiometrically in the same amounts as TXA2. Additionally, displays dehydratase activity, toward (15S)-hydroperoxy-(5Z,8Z,11Z,13E)-eicosatetraenoate (15(S)-HPETE) producing 15-KETE and 15-HETE. This chain is Thromboxane-A synthase (Tbxas1), found in Rattus norvegicus (Rat).